Consider the following 379-residue polypeptide: 2-methylcitrate synthase (379 aa).

A substrate-binding site is contributed by His187. His222 is an active-site residue. 264–268 (KVMGF) serves as a coordination point for CoA. His270 is a catalytic residue. Residue Arg279 participates in substrate binding. Asp321 is a catalytic residue. 2 residues coordinate substrate: Arg346 and Arg365.

It belongs to the citrate synthase family. Homodimer.

It catalyses the reaction propanoyl-CoA + oxaloacetate + H2O = (2S,3S)-2-methylcitrate + CoA + H(+). The enzyme catalyses oxaloacetate + acetyl-CoA + H2O = citrate + CoA + H(+). It functions in the pathway organic acid metabolism; propanoate degradation. The protein operates within carbohydrate metabolism; tricarboxylic acid cycle; isocitrate from oxaloacetate: step 1/2. Its function is as follows. Involved in the catabolism of short chain fatty acids (SCFA) via the tricarboxylic acid (TCA)(acetyl degradation route) and via the 2-methylcitrate cycle I (propionate degradation route). Catalyzes the Claisen condensation of propionyl-CoA and oxaloacetate (OAA) to yield 2-methylcitrate (2-MC) and CoA. Also catalyzes the condensation of oxaloacetate with acetyl-CoA but with a lower specificity. This Antarctic bacterium DS2-3R protein is 2-methylcitrate synthase (gltA).